We begin with the raw amino-acid sequence, 299 residues long: Small ribosomal subunit biogenesis GTPase RsgA (299 aa).

One can recognise a CP-type G domain in the interval lysine 64–leucine 225. Residues threonine 113 to aspartate 116 and glycine 168 to threonine 176 contribute to the GTP site. Cysteine 249, cysteine 254, histidine 256, and cysteine 262 together coordinate Zn(2+).

It belongs to the TRAFAC class YlqF/YawG GTPase family. RsgA subfamily. As to quaternary structure, monomer. Associates with 30S ribosomal subunit, binds 16S rRNA. The cofactor is Zn(2+).

The protein resides in the cytoplasm. One of several proteins that assist in the late maturation steps of the functional core of the 30S ribosomal subunit. Helps release RbfA from mature subunits. May play a role in the assembly of ribosomal proteins into the subunit. Circularly permuted GTPase that catalyzes slow GTP hydrolysis, GTPase activity is stimulated by the 30S ribosomal subunit. This Latilactobacillus sakei subsp. sakei (strain 23K) (Lactobacillus sakei subsp. sakei) protein is Small ribosomal subunit biogenesis GTPase RsgA.